A 768-amino-acid chain; its full sequence is Probable beta-glucosidase M (768 aa).

Residues 1-19 form the signal peptide; sequence MHAIAGLTGFLAGVSLSYA. Residues N25, N72, and N259 are each glycosylated (N-linked (GlcNAc...) asparagine). Residue D287 is part of the active site. N-linked (GlcNAc...) asparagine glycosylation is found at N315, N322, N394, N434, N472, N543, and N651.

Belongs to the glycosyl hydrolase 3 family.

It localises to the secreted. The enzyme catalyses Hydrolysis of terminal, non-reducing beta-D-glucosyl residues with release of beta-D-glucose.. Its pathway is glycan metabolism; cellulose degradation. In terms of biological role, beta-glucosidases are one of a number of cellulolytic enzymes involved in the degradation of cellulosic biomass. Catalyzes the last step releasing glucose from the inhibitory cellobiose. This Aspergillus flavus (strain ATCC 200026 / FGSC A1120 / IAM 13836 / NRRL 3357 / JCM 12722 / SRRC 167) protein is Probable beta-glucosidase M (bglM).